Reading from the N-terminus, the 83-residue chain is MVTIRLARGGAKKRPFYNIVVADSRNARDGRFIERVGFFNPLARGQEETLRLDLDRVEHWVATGAATSERVAKLIKDARKAVA.

It belongs to the bacterial ribosomal protein bS16 family.

The sequence is that of Small ribosomal subunit protein bS16 from Shewanella frigidimarina (strain NCIMB 400).